The chain runs to 84 residues: Defensin-like protein 49 (84 aa).

An N-terminal signal peptide occupies residues 1–29 (MGITKSLMIFFHIVLLAVSLSNNIILTSG). Cystine bridges form between Cys40–Cys82, Cys44–Cys68, Cys54–Cys80, and Cys58–Cys81.

This sequence belongs to the DEFL family.

It localises to the secreted. This Arabidopsis thaliana (Mouse-ear cress) protein is Defensin-like protein 49.